A 1770-amino-acid polypeptide reads, in one-letter code: Transposon Ty2-OR2 Gag-Pol polyprotein (1770 aa).

Disordered regions lie at residues 1-88 (MESQ…YQQH) and 359-449 (QHSE…SNDE). Composition is skewed to polar residues over residues 19–39 (ASVTSKEVPSNQDPLAVSASN) and 49–60 (KVNSQEETTPGT). Residues 295–397 (ENNINVSDRL…SSKPRAAKAH (103 aa)) form an RNA-binding region. Positions 369–381 (TSPNTTNTKVTTR) are enriched in low complexity. 2 stretches are compositionally biased toward polar residues: residues 399–408 (IATSSKFSRV) and 415–435 (ESTVSSQYLSDDNELSLGQQQ). Asp457 functions as the For protease activity; shared with dimeric partner in the catalytic mechanism. The interval 579-636 (NVNKSKSVNKYPYPLIHRMLGHANFRSIQKSLKKNAVTYLKESDIEWSNASTYQCPDC) is integrase-type zinc finger-like. In terms of domain architecture, Integrase catalytic spans 656-831 (ESYEPFQYLH…AGLDITTILP (176 aa)). The Mg(2+) site is built by Asp667 and Asp732. Disordered stretches follow at residues 1005 to 1038 (GGTIESDTTSPRHSSTFTARNQKRPGSPNDMIDL), 1057 to 1135 (GGTE…KSSK), 1146 to 1165 (LPLPDLTHKSPTDTSDVSKD), and 1170 to 1205 (HSRQTNSSLGGMDDSNVLTTTKSKKRSLEDNETEIE). Polar residues-rich tracts occupy residues 1009–1024 (ESDTTSPRHSSTFTAR) and 1065–1082 (QRNSDTNIKYRTTNSTPS). A compositionally biased stretch (basic and acidic residues) spans 1151-1165 (LTHKSPTDTSDVSKD). Positions 1193 to 1227 (KKRSLEDNETEIEVSRDTWNNKNMRSLEPPRSKKR) match the Bipartite nuclear localization signal motif. In terms of domain architecture, Reverse transcriptase Ty1/copia-type spans 1353–1491 (NDYYITQLDI…DILGLEIKYQ (139 aa)). The Mg(2+) site is built by Asp1361, Asp1442, Asp1443, Asp1625, Glu1667, and Asp1700. One can recognise an RNase H Ty1/copia-type domain in the interval 1625–1767 (DASYGNQPYY…IKTFKLLTNK (143 aa)).

The capsid protein forms a homotrimer, from which the VLPs are assembled. The protease is a homodimer, whose active site consists of two apposed aspartic acid residues. Initially, virus-like particles (VLPs) are composed of the structural unprocessed proteins Gag and Gag-Pol, and also contain the host initiator methionine tRNA (tRNA(i)-Met) which serves as a primer for minus-strand DNA synthesis, and a dimer of genomic Ty RNA. Processing of the polyproteins occurs within the particle and proceeds by an ordered pathway, called maturation. First, the protease (PR) is released by autocatalytic cleavage of the Gag-Pol polyprotein, and this cleavage is a prerequisite for subsequent processing at the remaining sites to release the mature structural and catalytic proteins. Maturation takes place prior to the RT reaction and is required to produce transposition-competent VLPs.

It localises to the cytoplasm. Its subcellular location is the nucleus. It carries out the reaction DNA(n) + a 2'-deoxyribonucleoside 5'-triphosphate = DNA(n+1) + diphosphate. It catalyses the reaction Endonucleolytic cleavage to 5'-phosphomonoester.. Functionally, capsid protein (CA) is the structural component of the virus-like particle (VLP), forming the shell that encapsulates the retrotransposons dimeric RNA genome. The particles are assembled from trimer-clustered units and there are holes in the capsid shells that allow for the diffusion of macromolecules. CA also has nucleocapsid-like chaperone activity, promoting primer tRNA(i)-Met annealing to the multipartite primer-binding site (PBS), dimerization of Ty2 RNA and initiation of reverse transcription. The aspartyl protease (PR) mediates the proteolytic cleavages of the Gag and Gag-Pol polyproteins after assembly of the VLP. Its function is as follows. Reverse transcriptase/ribonuclease H (RT) is a multifunctional enzyme that catalyzes the conversion of the retro-elements RNA genome into dsDNA within the VLP. The enzyme displays a DNA polymerase activity that can copy either DNA or RNA templates, and a ribonuclease H (RNase H) activity that cleaves the RNA strand of RNA-DNA heteroduplexes during plus-strand synthesis and hydrolyzes RNA primers. The conversion leads to a linear dsDNA copy of the retrotransposon that includes long terminal repeats (LTRs) at both ends. In terms of biological role, integrase (IN) targets the VLP to the nucleus, where a subparticle preintegration complex (PIC) containing at least integrase and the newly synthesized dsDNA copy of the retrotransposon must transit the nuclear membrane. Once in the nucleus, integrase performs the integration of the dsDNA into the host genome. This chain is Transposon Ty2-OR2 Gag-Pol polyprotein (TY2B-OR2), found in Saccharomyces cerevisiae (strain ATCC 204508 / S288c) (Baker's yeast).